The primary structure comprises 1179 residues: Probable manganese-transporting ATPase PDR2 (1179 aa).

Residues 1-20 (MSSFRVGGKVVEKVDLCRKK) lie on the Cytoplasmic side of the membrane. The chain crosses the membrane as a helical span at residues 21–42 (QLVWRLDVWPFAILYTVWLTTI). The Lumenal portion of the chain corresponds to 43–50 (VPSIDFSD). The chain crosses the membrane as a helical span at residues 51–71 (ACIALGGLSAFHILVLLFTTW). At 72–192 (SVDFKCFVQF…FDYPQPTFQK (121 aa)) the chain is on the cytoplasmic side. The chain crosses the membrane as a helical span at residues 193–215 (LMKENCMEPFFVFQVFCVGLWCL). The Lumenal portion of the chain corresponds to 216 to 218 (DEF). Residues 219–238 (WYYSVFTLFMLFMFESTMAK) form a helical membrane-spanning segment. Over 239–402 (SRLKTLTDLR…ERVTANSWES (164 aa)) the chain is Cytoplasmic. A helical membrane pass occupies residues 403–422 (GLFILFLVVFAVIAAGYVLV). The Lumenal portion of the chain corresponds to 423 to 435 (KGLEDPTRSKYKL). Residues 436–453 (LLGCSLIITSVIPPELPM) traverse the membrane as a helical segment. The Cytoplasmic segment spans residues 454–947 (ELSIAVNTSL…RQGRSTLVTT (494 aa)). Asp-491 (4-aspartylphosphate intermediate) is an active-site residue. Asp-812 and Asp-816 together coordinate Mg(2+). A disordered region spans residues 833 to 880 (KLPLSPSDSSKDDKSKSKKSKLPLEPASKTITQNGEGSSKGKIPPQNR). The helical transmembrane segment at 948-967 (LQMFKILGLNCLATAYVLSV) threads the bilayer. The Lumenal portion of the chain corresponds to 968–979 (MYLDGVKLGDVQ). A helical transmembrane segment spans residues 980-997 (ATISGVLTAAFFLFISHA). Topologically, residues 998-1013 (RPLQTLSAERPHPSVF) are cytoplasmic. A helical transmembrane segment spans residues 1014–1034 (SVYLFLSLIGQFAVHLTFLVY). Residues 1035–1059 (SVKEAEKHMPEECIEPDASFHPNLV) are Lumenal-facing. The chain crosses the membrane as a helical span at residues 1060-1079 (NTVSYMVSMMLQVATFAVNY). The Cytoplasmic portion of the chain corresponds to 1080-1092 (MGHPFNQSIRENK). Residues 1093 to 1110 (PFFYALIAGAGFFTVIAS) form a helical membrane-spanning segment. Residues 1111 to 1128 (DLFRDLNDSLKLVPLPQG) are Lumenal-facing. A helical membrane pass occupies residues 1129–1148 (LRDKLLIWASLMFIICYSWE). Residues 1149 to 1179 (RLLRWAFPGKISSWKHKQRAVTANLEKKKKV) lie on the Cytoplasmic side of the membrane.

It belongs to the cation transport ATPase (P-type) (TC 3.A.3) family. Type V subfamily. Highly expressed in root meristem. Expressed in pavement cells of trichomes, stipules, stamens and pollen grains.

It localises to the endoplasmic reticulum membrane. It catalyses the reaction ATP + H2O = ADP + phosphate + H(+). Its function is as follows. Mediates manganese transport into the endoplasmic reticulum. The ATPase activity is required for cellular manganese homeostasis. Plays an important role in pollen and root development through its impact on protein secretion and transport processes. Functions together with LPR1 and LPR2 in a common pathway that adjusts root meristem activity to phosphate availability. Under phosphate limitation, restricts SHR movement in root meristem and is required for maintaining SCR expression in the root meristem stem-cell niche as well as for proximal meristem activity. Can complement the yeast spf1 mutant. The protein is Probable manganese-transporting ATPase PDR2 (PDR2) of Arabidopsis thaliana (Mouse-ear cress).